The chain runs to 850 residues: Trimethylguanosine synthase (850 aa).

Residues 54–85 form a disordered region; the sequence is NNAGDRVTEEEEDDHSSGTTESHSADEGDLDP. At Thr61 the chain carries Phosphothreonine. A phosphoserine mark is found at Ser92 and Ser152. Disordered regions lie at residues 278–311, 327–454, and 523–566; these read DQNA…DNDH, EVEQ…GGIP, and ISQE…PENC. A compositionally biased stretch (basic and acidic residues) spans 363–374; sequence TPKESDISENRS. A compositionally biased stretch (polar residues) spans 375–390; the sequence is SDQPAQELQESSGTNT. Residues Ser405 and Ser431 each carry the phosphoserine modification. The span at 424–435 shows a compositional bias: acidic residues; sequence DIDENPDSEVDD. Residues 548 to 562 show a composition bias toward basic and acidic residues; that stretch reads SMEKTDGLMETRDPE. Position 571 is a phosphoserine (Ser571). Residues 595–628 form a disordered region; sequence TEGVANSPRAEAEVEIKKKKKKKKKNKNKKINGL. The span at 611-624 shows a compositional bias: basic residues; the sequence is KKKKKKKKKNKNKK. Residue Asp713 coordinates S-adenosyl-L-methionine.

It belongs to the methyltransferase superfamily. Trimethylguanosine synthase family. As to quaternary structure, may form homooligomers. Interacts with CREBBP/CBP, EED/WAIT1, EP300/P300, NCOA6/PRIP, PPARBP/PBP and SMN. In terms of tissue distribution, a 55 kDa isoform is widely expressed while a 90 kDa isoform is detected exclusively in brain and testis (at protein level).

It localises to the cytoplasm. The protein localises to the nucleus. Its subcellular location is the cajal body. It is found in the nucleolus. The enzyme catalyses a 5'-end (N(7)-methyl 5'-triphosphoguanosine)-ribonucleoside in snRNA + S-adenosyl-L-methionine = a 5'-end (N(2),N(7)-dimethyl 5'-triphosphoguanosine)-ribonucleoside in snRNA + S-adenosyl-L-homocysteine + H(+). It catalyses the reaction a 5'-end (N(7)-methyl 5'-triphosphoguanosine)-ribonucleoside in snoRNA + S-adenosyl-L-methionine = a 5'-end (N(2),N(7)-dimethyl 5'-triphosphoguanosine)-ribonucleoside in snoRNA + S-adenosyl-L-homocysteine + H(+). It carries out the reaction a 5'-end (N(2),N(7)-dimethyl 5'-triphosphoguanosine)-ribonucleoside in snRNA + S-adenosyl-L-methionine = a 5'-end (N(2),N(2),N(7)-trimethyl 5'-triphosphoguanosine)-ribonucleoside in snRNA + S-adenosyl-L-homocysteine + H(+). The catalysed reaction is a 5'-end (N(2),N(7)-dimethyl 5'-triphosphoguanosine)-ribonucleoside in snoRNA + S-adenosyl-L-methionine = a 5'-end (N(2),N(2),N(7)-trimethyl 5'-triphosphoguanosine)-ribonucleoside in snoRNA + S-adenosyl-L-homocysteine + H(+). Its function is as follows. Catalyzes the 2 serial methylation steps for the conversion of the 7-monomethylguanosine (m(7)G) caps of snRNAs and snoRNAs to a 2,2,7-trimethylguanosine (m(2,2,7)G) cap structure. The enzyme is specific for guanine, and N7 methylation must precede N2 methylation. Hypermethylation of the m7G cap of U snRNAs leads to their concentration in nuclear foci, their colocalization with coilin and the formation of canonical Cajal bodies (CBs). Plays a role in transcriptional regulation. The protein is Trimethylguanosine synthase of Rattus norvegicus (Rat).